A 2793-amino-acid polypeptide reads, in one-letter code: Iterative polyketide synthase afoE (2793 aa).

The interval 1–401 is N-terminal acylcarrier protein transacylase domain (SAT); it reads MTRASASGSG…PEKPSFWLTP (401 aa). Cys157 functions as the Nucleophile; for transacylase activity in the catalytic mechanism. The Proton donor/acceptor; for transacylase activity role is filled by His279. A Ketosynthase family 3 (KS3) domain is found at 435–862; that stretch reads SEPIAIVGMS…GSNASMIVTQ (428 aa). Catalysis depends on for beta-ketoacyl synthase activity residues Cys611, His746, and His785. The malonyl-CoA:ACP transacylase (MAT) stretch occupies residues 977–1265; that stretch reads FGGQISRFVG…SSTITVMAGR (289 aa). Residues 1384–1515 form an N-terminal hotdog fold region; it reads WEFVGYQDDE…ATVEMRSSSD (132 aa). In terms of domain architecture, PKS/mFAS DH spans 1384–1698; that stretch reads WEFVGYQDDE…YMRVAKASMS (315 aa). The tract at residues 1411–1696 is product template (PT) domain; that stretch reads YVLSHVIAQT…VQYMRVAKAS (286 aa). His1415 serves as the catalytic Proton acceptor; for dehydratase activity. A C-terminal hotdog fold region spans residues 1550-1698; sequence VEVLQGRNVY…YMRVAKASMS (149 aa). Asp1607 functions as the Proton donor; for dehydratase activity in the catalytic mechanism. Positions 1734-1776 are disordered; that stretch reads PEVRASSEPGAKVKASKTSKKEKKEKKPVTKAKSKSSKPSGWR. The segment covering 1747–1769 has biased composition (basic residues); it reads KASKTSKKEKKEKKPVTKAKSKS. One can recognise a Carrier domain in the interval 1776–1850; it reads RDITEEVRNL…KFVQCVSNAL (75 aa). Ser1810 carries the O-(pantetheine 4'-phosphoryl)serine modification. A disordered region spans residues 1853–1903; it reads PNAGPAEAEDDEDEEKSDNSSSESASESDDAGSESSDTGILTPTGEEEQPL. Over residues 1859–1868 the composition is skewed to acidic residues; sequence EAEDDEDEEK. The segment at 2115–2294 is methyltransferase domain; sequence NLLAERIGRT…HVDWTDGNLP (180 aa). The interval 2360-2379 is disordered; sequence SRAEKESGKTQAPHAAPGRR. Residues 2387–2630 form an NADPH-binding domain region; it reads VTGATGSLGS…QWIPVDYCAA (244 aa).

Pantetheine 4'-phosphate serves as cofactor.

It carries out the reaction (3E,5E,7S)-5,7-dimethyl-2-oxonona-3,5-dienyl-[ACP] + 4 malonyl-CoA + AH2 + S-adenosyl-L-methionine + 3 H(+) = 6-[(3E,5E,7S)-5,7-dimethyl-2-oxonona-3,5-dienyl]-2,4-dihydroxy-3-methylbenzaldehyde + holo-[ACP] + A + S-adenosyl-L-homocysteine + 4 CO2 + 4 CoA + H2O. It functions in the pathway secondary metabolite biosynthesis. Iterative polyketide synthase; part of the gene cluster that mediates the biosynthesis of asperfuranone, a probable antitumor agent. The polyketide synthase afoG is responsible for producing the 3,5-dimethyloctadienone moiety from acetyl-CoA, three malonyl-CoA, and two S-adenosyl methionines (SAM). The 3,5-dimethyloctadienone moiety is then loaded onto the SAT domain of afoE and extended with four malonyl-CoA and one SAM, which leads to the formation of 2,4-dihydroxy-6-(5,7-dimethyl-2-oxo-trans-3-trans-5-nonadienyl)-3-methylbenzaldehyde (compound 2) after reductive release and aldol condensation. AfoD is the next enzyme in the biosynthesis sequence and hydroxylates the side chain at the benzylic position of compound 2. After benzylic hydroxylation, a furan ring is formed after five-member ring hemiacetal formation and water elimination. AfoF and afoC are proposed to oxidize the R-diketone proton and to reduce the unconjugated carbonyl group, respectively, to generate asperfuranone. Since no intermediates could be isolated from afoF and afoC deletants, the sequence of these two enzymes is not fully understood. Moreover, since afoC deletant still produces a small amount of asperfuranone, other endogenous oxidoreductases might catalyze the same reaction with much less efficiency. The chain is Iterative polyketide synthase afoE from Emericella nidulans (strain FGSC A4 / ATCC 38163 / CBS 112.46 / NRRL 194 / M139) (Aspergillus nidulans).